The primary structure comprises 207 residues: Histidine biosynthesis bifunctional protein HisIE (207 aa).

Residues 1–117 (MQNFKELNEK…KISKNADFVF (117 aa)) are phosphoribosyl-AMP cyclohydrolase. Residues 118–207 (LARLEKLINA…ISKLKERHKA (90 aa)) form a phosphoribosyl-ATP pyrophosphohydrolase region.

This sequence in the N-terminal section; belongs to the PRA-CH family. In the C-terminal section; belongs to the PRA-PH family.

The protein localises to the cytoplasm. It catalyses the reaction 1-(5-phospho-beta-D-ribosyl)-ATP + H2O = 1-(5-phospho-beta-D-ribosyl)-5'-AMP + diphosphate + H(+). The enzyme catalyses 1-(5-phospho-beta-D-ribosyl)-5'-AMP + H2O = 1-(5-phospho-beta-D-ribosyl)-5-[(5-phospho-beta-D-ribosylamino)methylideneamino]imidazole-4-carboxamide. It participates in amino-acid biosynthesis; L-histidine biosynthesis; L-histidine from 5-phospho-alpha-D-ribose 1-diphosphate: step 2/9. Its pathway is amino-acid biosynthesis; L-histidine biosynthesis; L-histidine from 5-phospho-alpha-D-ribose 1-diphosphate: step 3/9. The chain is Histidine biosynthesis bifunctional protein HisIE (hisI) from Campylobacter jejuni subsp. jejuni serotype O:2 (strain ATCC 700819 / NCTC 11168).